The sequence spans 71 residues: uncharacterized protein (71 aa).

The span at 20 to 32 (SSGRRQLTATQPR) shows a compositional bias: polar residues. The disordered stretch occupies residues 20–46 (SSGRRQLTATQPRSDPESQRGRTSSNR).

This is an uncharacterized protein from Rhizobium leguminosarum.